We begin with the raw amino-acid sequence, 292 residues long: Non-homologous end joining protein Ku (292 aa).

Residues 12–196 (KLSLVTCPVV…KITKDMVELA (185 aa)) enclose the Ku domain. Residues 231-292 (KPIKLPEPEE…RSAARQRKAG (62 aa)) are disordered. Residues 271-292 (APAHRRPAKKAHRSAARQRKAG) show a composition bias toward basic residues.

Belongs to the prokaryotic Ku family. In terms of assembly, homodimer. Interacts with LigD.

Functionally, with LigD forms a non-homologous end joining (NHEJ) DNA repair enzyme, which repairs dsDNA breaks with reduced fidelity. Binds linear dsDNA with 5'- and 3'- overhangs but not closed circular dsDNA nor ssDNA. Recruits and stimulates the ligase activity of LigD. The sequence is that of Non-homologous end joining protein Ku from Bradyrhizobium sp. (strain ORS 278).